The sequence spans 668 residues: Acyl-CoA-binding domain-containing protein 4 (668 aa).

The 95-residue stretch at 12-106 folds into the ACB domain; the sequence is YPERFYAAAS…LEEDDPGWYS (95 aa). Residues K33, 48–52, and K74 contribute to the an acyl-CoA site; that span reads YALYQ. Kelch repeat units lie at residues 195–242, 255–305, 307–356, 358–407, 408–456, and 463–508; these read KMYI…TLLA, KLLS…MVGK, LVIF…VHAE, FLLI…TIGE, NWFI…LVVS, and VLVA…VNNA. A phosphoserine mark is found at S515 and S520. Positions 538–647 form a coiled coil; sequence KVEGNSERII…EQAAMNAKRQ (110 aa). A disordered region spans residues 639–668; it reads QAAMNAKRQGSGGVWGWLAGSPQEKDDDSP.

This sequence belongs to the ACBP family. Interacts with RAP2-3/EBP, an ethylene-responsive element binding protein. Mostly expressed in roots, stems, and leaves, and, to a lower extent, in flowers and siliques.

It is found in the cytoplasm. Binds medium- and long-chain acyl-CoA esters with very high affinity. Can interact in vitro with oleoyl-CoA, barely with palmitoyl-CoA, but not with arachidonyl-CoA. May function as an intracellular carrier of acyl-CoA esters. Plays a role in the biosynthesis of membrane lipids including galactolipids and phospholipids. The chain is Acyl-CoA-binding domain-containing protein 4 (ACBP4) from Arabidopsis thaliana (Mouse-ear cress).